The primary structure comprises 444 residues: Phosphoglucosamine mutase (444 aa).

Ser100 (phosphoserine intermediate) is an active-site residue. 4 residues coordinate Mg(2+): Ser100, Asp240, Asp242, and Asp244. Ser100 carries the phosphoserine modification.

The protein belongs to the phosphohexose mutase family. Mg(2+) serves as cofactor. Activated by phosphorylation.

The catalysed reaction is alpha-D-glucosamine 1-phosphate = D-glucosamine 6-phosphate. Catalyzes the conversion of glucosamine-6-phosphate to glucosamine-1-phosphate. The chain is Phosphoglucosamine mutase from Moorella thermoacetica (strain ATCC 39073 / JCM 9320).